Reading from the N-terminus, the 430-residue chain is Carbamoyl phosphate synthase arginine-specific small chain (430 aa).

The N-terminal 9 residues, 1–9 (MLSATKRYL), are a transit peptide targeting the mitochondrion. The region spanning 219 to 407 (HIAVLDCGAK…FDNINVYKKS (189 aa)) is the Glutamine amidotransferase type-1 domain. Cys-296 acts as the Nucleophile in catalysis. Residues His-380 and Glu-382 contribute to the active site.

This sequence belongs to the CarA family. Heterodimer composed of 2 chains; the small (or glutamine) chain promotes the hydrolysis of glutamine to ammonia, which is used by the large (or ammonia) chain to synthesize carbamoyl phosphate.

The protein localises to the mitochondrion matrix. It catalyses the reaction hydrogencarbonate + L-glutamine + 2 ATP + H2O = carbamoyl phosphate + L-glutamate + 2 ADP + phosphate + 2 H(+). It carries out the reaction L-glutamine + H2O = L-glutamate + NH4(+). It participates in amino-acid biosynthesis; L-arginine biosynthesis; carbamoyl phosphate from bicarbonate: step 1/1. Functionally, small subunit of the arginine-specific carbamoyl phosphate synthase (CPSase). CPSase catalyzes the formation of carbamoyl phosphate from the ammonia moiety of glutamine, carbonate, and phosphate donated by ATP, the first step of the arginine biosynthetic pathway. The small subunit (glutamine amidotransferase) binds and cleaves glutamine to supply the large subunit with the substrate ammonia. The protein is Carbamoyl phosphate synthase arginine-specific small chain (CPA1) of Candida albicans (strain SC5314 / ATCC MYA-2876) (Yeast).